The primary structure comprises 799 residues: Zinc finger X-linked protein ZXDA (799 aa).

The interval 1–89 (MEIPKLLPAR…QPSGGGDDFF (89 aa)) is disordered. Residues 13–26 (LQGGGGGGIPAGGG) show a composition bias toward gly residues. 10 consecutive C2H2-type zinc fingers follow at residues 267–291 (YLCP…LLTH), 300–324 (FKCP…LQSH), 330–354 (FGCP…MKGH), 360–382 (FKCE…QRSH), 389–413 (YQCA…NRAH), 420–444 (FSCS…LRSH), 450–474 (FLCD…KRKH), 480–504 (FMCP…SITH), 510–534 (FVCP…SKKH), and 543–568 (SRCP…VKRH). The required for interaction with ZXDC stretch occupies residues 267–573 (YLCPEALCGQ…MVKRHKVGQD (307 aa)). Positions 572–699 (QDLLAQLEAA…NMDEVSSVSV (128 aa)) are required for transcriptional activation.

It belongs to the ZXD family. As to quaternary structure, self-associates. Interacts with ZXDC and CIITA. May be expressed in brain, heart, kidney, liver, lung, muscle and placenta.

The protein resides in the nucleus. In terms of biological role, cooperates with CIITA to promote transcription of MHC class I and MHC class II genes. In Homo sapiens (Human), this protein is Zinc finger X-linked protein ZXDA (ZXDA).